A 178-amino-acid chain; its full sequence is Large ribosomal subunit protein uL6 (178 aa).

This sequence belongs to the universal ribosomal protein uL6 family. As to quaternary structure, part of the 50S ribosomal subunit.

This protein binds to the 23S rRNA, and is important in its secondary structure. It is located near the subunit interface in the base of the L7/L12 stalk, and near the tRNA binding site of the peptidyltransferase center. The protein is Large ribosomal subunit protein uL6 of Paenarthrobacter aurescens (strain TC1).